Here is a 216-residue protein sequence, read N- to C-terminus: N-(5'-phosphoribosyl)anthranilate isomerase (216 aa).

The protein belongs to the TrpF family.

It catalyses the reaction N-(5-phospho-beta-D-ribosyl)anthranilate = 1-(2-carboxyphenylamino)-1-deoxy-D-ribulose 5-phosphate. It functions in the pathway amino-acid biosynthesis; L-tryptophan biosynthesis; L-tryptophan from chorismate: step 3/5. This chain is N-(5'-phosphoribosyl)anthranilate isomerase, found in Leptospira borgpetersenii serovar Hardjo-bovis (strain JB197).